The following is a 176-amino-acid chain: NAD(P)H-quinone oxidoreductase subunit 6, chloroplastic (176 aa).

5 helical membrane passes run 10–30, 32–52, 61–81, 92–112, and 152–172; these read FLLV…VLLT, PIFS…FFSL, AQLL…VMFM, LWTV…ISLI, and FFLP…GAIA.

Belongs to the complex I subunit 6 family. NDH is composed of at least 16 different subunits, 5 of which are encoded in the nucleus.

It is found in the plastid. The protein resides in the chloroplast thylakoid membrane. The enzyme catalyses a plastoquinone + NADH + (n+1) H(+)(in) = a plastoquinol + NAD(+) + n H(+)(out). It catalyses the reaction a plastoquinone + NADPH + (n+1) H(+)(in) = a plastoquinol + NADP(+) + n H(+)(out). NDH shuttles electrons from NAD(P)H:plastoquinone, via FMN and iron-sulfur (Fe-S) centers, to quinones in the photosynthetic chain and possibly in a chloroplast respiratory chain. The immediate electron acceptor for the enzyme in this species is believed to be plastoquinone. Couples the redox reaction to proton translocation, and thus conserves the redox energy in a proton gradient. The sequence is that of NAD(P)H-quinone oxidoreductase subunit 6, chloroplastic (ndhG) from Oenothera argillicola (Appalachian evening primrose).